A 332-amino-acid polypeptide reads, in one-letter code: Ribosomal RNA-processing protein 8 (332 aa).

Positions 1 to 109 are disordered; it reads MGKKRINEVS…EVEKKNEEGD (109 aa). Composition is skewed to basic residues over residues 38–53 and 82–94; these read KKKKRPWRNKVRKLAA and KKKKKRGPKKKKY. A compositionally biased stretch (basic and acidic residues) spans 95–109; sequence KPEAAEVEKKNEEGD. Residues His-158, Gly-193, Asp-213, Asp-225, Met-226, and Cys-242 each coordinate S-adenosyl-L-methionine.

Belongs to the methyltransferase superfamily. RRP8 family.

It localises to the nucleus. It is found in the nucleolus. In terms of biological role, probable methyltransferase required to silence rDNA. This chain is Ribosomal RNA-processing protein 8 (rrp-8), found in Caenorhabditis briggsae.